The primary structure comprises 917 residues: DNA topoisomerase 1 beta (917 aa).

The tract at residues Met-1–Lys-368 is disordered. The span at Arg-32–Pro-63 shows a compositional bias: polar residues. A compositionally biased stretch (low complexity) spans Ser-66 to Ser-82. The span at Pro-89–Lys-100 shows a compositional bias: polar residues. Basic and acidic residues-rich tracts occupy residues Pro-102–Gly-116 and Asp-134–Thr-149. Polar residues predominate over residues Lys-150–Arg-170. Residues Tyr-177–Ala-187 are compositionally biased toward basic and acidic residues. Positions Met-189–Lys-205 are enriched in polar residues. 2 stretches are compositionally biased toward basic and acidic residues: residues Lys-256 to Lys-265 and Val-296 to Val-307. Position 301 is a phosphoserine (Ser-301). Low complexity predominate over residues Asp-316–Arg-338. 3 interaction with DNA regions span residues Lys-575–Tyr-576, Arg-638–Lys-643, and Thr-729–Lys-731. Positions Ser-582–Cys-912 constitute a Topo IB-type catalytic domain. Positions Val-779–Met-858 form a coiled coil. The active-site O-(3'-phospho-DNA)-tyrosine intermediate is the Tyr-870.

It belongs to the type IB topoisomerase family.

It is found in the nucleus. It carries out the reaction ATP-independent breakage of single-stranded DNA, followed by passage and rejoining.. Functionally, releases the supercoiling and torsional tension of DNA introduced during the DNA replication and transcription by transiently cleaving and rejoining one strand of the DNA duplex. Introduces a single-strand break via transesterification at a target site in duplex DNA. The scissile phosphodiester is attacked by the catalytic tyrosine of the enzyme, resulting in the formation of a DNA-(3'-phosphotyrosyl)-enzyme intermediate and the expulsion of a 5'-OH DNA strand. The free DNA strand then rotates around the intact phosphodiester bond on the opposing strand, thus removing DNA supercoils. Finally, in the religation step, the DNA 5'-OH attacks the covalent intermediate to expel the active-site tyrosine and restore the DNA phosphodiester backbone. Topoisomerases 1 enzymes (TOP1A and TOP1B) are essential for plant survival. The chain is DNA topoisomerase 1 beta from Arabidopsis thaliana (Mouse-ear cress).